We begin with the raw amino-acid sequence, 338 residues long: Beta-ketoacyl-[acyl-carrier-protein] synthase III 2 (338 aa).

Residues Cys119 and His255 contribute to the active site. Residues 256 to 260 form an ACP-binding region; that stretch reads QANIR. Residue Asn285 is part of the active site.

Belongs to the thiolase-like superfamily. FabH family. As to quaternary structure, homodimer.

Its subcellular location is the cytoplasm. It carries out the reaction malonyl-[ACP] + acetyl-CoA + H(+) = 3-oxobutanoyl-[ACP] + CO2 + CoA. It functions in the pathway lipid metabolism; fatty acid biosynthesis. In terms of biological role, catalyzes the condensation reaction of fatty acid synthesis by the addition to an acyl acceptor of two carbons from malonyl-ACP. Catalyzes the first condensation reaction which initiates fatty acid synthesis and may therefore play a role in governing the total rate of fatty acid production. Possesses both acetoacetyl-ACP synthase and acetyl transacylase activities. Its substrate specificity determines the biosynthesis of branched-chain and/or straight-chain of fatty acids. The polypeptide is Beta-ketoacyl-[acyl-carrier-protein] synthase III 2 (Deinococcus radiodurans (strain ATCC 13939 / DSM 20539 / JCM 16871 / CCUG 27074 / LMG 4051 / NBRC 15346 / NCIMB 9279 / VKM B-1422 / R1)).